A 181-amino-acid polypeptide reads, in one-letter code: Adenine phosphoribosyltransferase (181 aa).

It belongs to the purine/pyrimidine phosphoribosyltransferase family. Homodimer.

Its subcellular location is the cytoplasm. It carries out the reaction AMP + diphosphate = 5-phospho-alpha-D-ribose 1-diphosphate + adenine. The protein operates within purine metabolism; AMP biosynthesis via salvage pathway; AMP from adenine: step 1/1. Catalyzes a salvage reaction resulting in the formation of AMP, that is energically less costly than de novo synthesis. This chain is Adenine phosphoribosyltransferase, found in Methylorubrum extorquens (strain CM4 / NCIMB 13688) (Methylobacterium extorquens).